Here is a 1335-residue protein sequence, read N- to C-terminus: Regulatory-associated protein of mTOR (1335 aa).

Phosphoserine occurs at positions 44 and 122. Ser-696 is modified (phosphoserine; by MAPK8). A glycan (O-linked (GlcNAc) threonine) is linked at Thr-700. Thr-706 is modified (phosphothreonine; by MAPK8). Phosphoserine; by RPS6KA1 occurs at positions 719 and 721. Ser-722 bears the Phosphoserine; by AMPK and RPS6KA1 mark. A Phosphoserine modification is found at Ser-738. Position 791 is a phosphoserine; by PKA (Ser-791). Ser-792 carries the phosphoserine; by AMPK modification. Residues Ser-836 and Ser-855 each carry the phosphoserine modification. The tract at residues 850–943 (VLDTSSLTQS…PEQTADDADD (94 aa)) is disordered. The segment covering 851 to 866 (LDTSSLTQSAPASPTN) has biased composition (polar residues). Ser-859 bears the Phosphoserine; by MTOR mark. Ser-863 is subject to Phosphoserine; by MAPK8, MTOR and NLK. Thr-865 carries the phosphothreonine modification. Over residues 874-887 (AGGSPPASSTSSSS) the composition is skewed to low complexity. Ser-877 carries the post-translational modification Phosphoserine; by TBK1. Glycyl lysine isopeptide (Lys-Gly) (interchain with G-Cter in ubiquitin) cross-links involve residues Lys-932 and Lys-948. Ser-982 is modified (phosphoserine). WD repeat units lie at residues 1020 to 1061 (NRNP…DYFH), 1065 to 1106 (PRYT…EKNP), 1121 to 1160 (TTRGAGMVVDWEQETGLLMSSGDVRIVRIWDTDREMKVQD), 1164 to 1203 (GADSCVTSLSCDSHRSLIVAGLGDGSIRVYDRRMALSECR), 1209 to 1249 (EHTA…SVNV), 1251 to 1291 (QIVK…NNIK), and 1299 to 1335 (QRVGAISCLAFHPHWPHLAVGSNDYYISVYSVEKRVR). The residue at position 1097 (Lys-1097) is an N6-acetyllysine.

Belongs to the WD repeat RAPTOR family. Part of the mechanistic target of rapamycin complex 1 (mTORC1) which contains MTOR, MLST8 and RPTOR. mTORC1 associates with AKT1S1/PRAS40, which inhibits its activity. mTORC1 associates with DEPTOR, which regulates its activity. mTORC1 binds to and is inhibited by FKBP12-rapamycin. Forms a complex with MTOR under both leucine-rich and -poor conditions. Interacts with (via TOS motifs) EIF4EBP1 and RPS6KB1; interaction is independent of its association with MTOR. Binds preferentially to poorly or non-phosphorylated forms of EIF4EBP1, and this binding is critical to the ability of MTOR to catalyze phosphorylation. Interacts with ULK1 in a nutrient-dependent manner; the interaction is reduced during starvation. Interacts with GTP-bound form of RagA/RRAGA or RagB/RRAGB and GDP-bound form of RagC/RRAGC or RagD/RRAGD, promoting recruitment of mTORC1 to the lysosomes. Interacts (when phosphorylated by AMPK) with 14-3-3 protein, leading to inhibition of its activity. Interacts with SPAG5; SPAG5 competes with MTOR for RPTOR-binding, resulting in decreased mTORC1 formation. Interacts with WAC; WAC positively regulates MTOR activity by promoting the assembly of the TTT complex composed of TELO2, TTI1 and TTI2 and the RUVBL complex composed of RUVBL1 and RUVBL2 into the TTT-RUVBL complex which leads to the dimerization of the mTORC1 complex and its subsequent activation. Interacts with G3BP1. The complex formed with G3BP1 and SPAG5 is increased by oxidative stress. Interacts with HTR6. Interacts with PIH1D1. Interacts with LARP1. Interacts with BRAT1. Interacts with SIK3. Interacts with SLC38A7; this interaction mediates the recruitment of mTORC1 to the lysosome and its subsequent activation. In terms of assembly, (Microbial infection) Interacts with vaccinia virus protein F17; this interaction dysregulates mTOR. In terms of processing, insulin-stimulated phosphorylation at Ser-863 by MTOR and MAPK8 regulates mTORC1 activity. Phosphorylated at Ser-863 by NLK in response to stress, disrupting the interaction with small GTPases Rag (RagA/RRAGA, RagB/RRAGB, RagC/RRAGC and/or RagD/RRAGD), thereby preventing lysosome recruitment and activation of the mTORC1 complex. Osmotic stress also induces phosphorylation at Ser-696, Thr-706 and Ser-863 by MAPK8. Ser-863 phosphorylation is required for phosphorylation at Ser-855 and Ser-859. In response to nutrient limitation, phosphorylated at Ser-722 and Ser-792 by AMPK; phosphorylation promotes interaction with 14-3-3 proteins, leading to negative regulation of the mTORC1 complex. Phosphorylation at Ser-722 and Ser-792 by AMPK in response to glucose starvation inhibits O-GlcNAcylation by OGT and subsequent activation of mTORC1. In response to growth factors, phosphorylated at Ser-719, Ser-721 and Ser-722 by RPS6KA1, which stimulates mTORC1 activity. Phosphorylation at Ser-791 by PKA downstream of cAMP inhibits the mTORC1 complex. Phosphorylated at Ser-877 by TBK1, leading to negative regulation of the mTORC1 complex. Post-translationally, O-GlcNAcylated by OGT upon glucose sufficiency, promoting interaction with small GTPases Rag (RagA/RRAGA, RagB/RRAGB, RagC/RRAGC and/or RagD/RRAGD) and subsequent recruitment of mTORC1 to lysosomal membranes, leading to activation of the mTORC1 complex. Phosphorylation at Ser-722 and Ser-792 by AMPK in response to glucose starvation inhibits O-GlcNAcylation. Acetylation at Lys-1097 by EP300/p300 in response to leucine metabolite acetyl-coA promotes its activity, leading to activation of the mTORC1 complex. Acetylation is decreased in response to fasting. In terms of processing, ubiquitinated, leading to its degradation by the proteasome. Deubiquitinated by OTUB1 via a non-catalytic mechanism. Ubiquitinated by an E3 ubiquitin ligase complex containing VHL. In terms of tissue distribution, highly expressed in skeletal muscle, and in a lesser extent in brain, lung, small intestine, kidney and placenta. As to expression, widely expressed, with highest levels in nasal mucosa and pituitary and lowest in spleen.

It is found in the lysosome membrane. The protein localises to the cytoplasm. It localises to the cytoplasmic granule. Its function is as follows. Component of the mechanistic target of rapamycin complex 1 (mTORC1), an evolutionarily conserved central nutrient sensor that stimulates anabolic reactions and macromolecule biosynthesis to promote cellular biomass generation and growth. In response to nutrients, growth factors or amino acids, mTORC1 is recruited to the lysosome membrane and promotes protein, lipid and nucleotide synthesis by phosphorylating several substrates, such as ribosomal protein S6 kinase (RPS6KB1 and RPS6KB2) and EIF4EBP1 (4E-BP1). In the same time, it inhibits catabolic pathways by phosphorylating the autophagy initiation components ULK1 and ATG13, as well as transcription factor TFEB, a master regulators of lysosomal biogenesis and autophagy. The mTORC1 complex is inhibited in response to starvation and amino acid depletion. Within the mTORC1 complex, RPTOR acts both as a molecular adapter, which (1) mediates recruitment of mTORC1 to lysosomal membranes via interaction with small GTPases Rag (RagA/RRAGA, RagB/RRAGB, RagC/RRAGC and/or RagD/RRAGD), and a (2) substrate-specific adapter, which promotes substrate specificity by binding to TOS motif-containing proteins and direct them towards the active site of the MTOR kinase domain for phosphorylation. mTORC1 complex regulates many cellular processes, such as odontoblast and osteoclast differentiation or neuronal transmission. mTORC1 complex in excitatory neuronal transmission is required for the prosocial behavior induced by the psychoactive substance lysergic acid diethylamide (LSD). The protein is Regulatory-associated protein of mTOR of Homo sapiens (Human).